The chain runs to 319 residues: Epoxyqueuosine reductase (319 aa).

The active-site Proton donor is aspartate 146. Positions 188–220 (ASLPADQPARSLCGHCQRCLPACPTAAITEPFV) constitute a 4Fe-4S ferredoxin-type domain. Cysteine 200, cysteine 203, cysteine 206, cysteine 210, cysteine 226, cysteine 250, cysteine 253, and cysteine 257 together coordinate [4Fe-4S] cluster.

It belongs to the QueG family. Monomer. Requires cob(II)alamin as cofactor. The cofactor is [4Fe-4S] cluster.

It is found in the cytoplasm. The catalysed reaction is epoxyqueuosine(34) in tRNA + AH2 = queuosine(34) in tRNA + A + H2O. Its pathway is tRNA modification; tRNA-queuosine biosynthesis. In terms of biological role, catalyzes the conversion of epoxyqueuosine (oQ) to queuosine (Q), which is a hypermodified base found in the wobble positions of tRNA(Asp), tRNA(Asn), tRNA(His) and tRNA(Tyr). In Synechococcus sp. (strain RCC307), this protein is Epoxyqueuosine reductase.